Here is a 105-residue protein sequence, read N- to C-terminus: Dynein axonemal light chain 4 (105 aa).

Belongs to the dynein light chain family. In terms of assembly, consists of at least two heavy chains and a number of intermediate and light chains.

It is found in the cytoplasm. The protein localises to the cytoskeleton. Its subcellular location is the cilium axoneme. Its function is as follows. Force generating protein of respiratory cilia. Produces force towards the minus ends of microtubules. Dynein has ATPase activity. The polypeptide is Dynein axonemal light chain 4 (Dnal4) (Mus musculus (Mouse)).